Reading from the N-terminus, the 461-residue chain is Bifunctional protein GlmU (461 aa).

The tract at residues 1–229 (MEKYVVVLAA…FSESLGVNDR (229 aa)) is pyrophosphorylase. UDP-N-acetyl-alpha-D-glucosamine is bound by residues 8–11 (LAAG), K22, Q72, and 77–78 (GT). D102 contacts Mg(2+). G139, E154, N169, and N227 together coordinate UDP-N-acetyl-alpha-D-glucosamine. N227 contacts Mg(2+). Residues 230 to 250 (IALAEATRIMQRRINEGHMRD) form a linker region. Positions 251–461 (GVTFIDPATA…LPLSEDEEWK (211 aa)) are N-acetyltransferase. Residues R332 and K350 each coordinate UDP-N-acetyl-alpha-D-glucosamine. H362 serves as the catalytic Proton acceptor. UDP-N-acetyl-alpha-D-glucosamine contacts are provided by Y365 and N376. 2 residues coordinate acetyl-CoA: A422 and R439.

This sequence in the N-terminal section; belongs to the N-acetylglucosamine-1-phosphate uridyltransferase family. The protein in the C-terminal section; belongs to the transferase hexapeptide repeat family. In terms of assembly, homotrimer. Mg(2+) is required as a cofactor.

The protein resides in the cytoplasm. It catalyses the reaction alpha-D-glucosamine 1-phosphate + acetyl-CoA = N-acetyl-alpha-D-glucosamine 1-phosphate + CoA + H(+). It carries out the reaction N-acetyl-alpha-D-glucosamine 1-phosphate + UTP + H(+) = UDP-N-acetyl-alpha-D-glucosamine + diphosphate. It participates in nucleotide-sugar biosynthesis; UDP-N-acetyl-alpha-D-glucosamine biosynthesis; N-acetyl-alpha-D-glucosamine 1-phosphate from alpha-D-glucosamine 6-phosphate (route II): step 2/2. The protein operates within nucleotide-sugar biosynthesis; UDP-N-acetyl-alpha-D-glucosamine biosynthesis; UDP-N-acetyl-alpha-D-glucosamine from N-acetyl-alpha-D-glucosamine 1-phosphate: step 1/1. It functions in the pathway bacterial outer membrane biogenesis; LPS lipid A biosynthesis. Catalyzes the last two sequential reactions in the de novo biosynthetic pathway for UDP-N-acetylglucosamine (UDP-GlcNAc). The C-terminal domain catalyzes the transfer of acetyl group from acetyl coenzyme A to glucosamine-1-phosphate (GlcN-1-P) to produce N-acetylglucosamine-1-phosphate (GlcNAc-1-P), which is converted into UDP-GlcNAc by the transfer of uridine 5-monophosphate (from uridine 5-triphosphate), a reaction catalyzed by the N-terminal domain. In Lactobacillus delbrueckii subsp. bulgaricus (strain ATCC BAA-365 / Lb-18), this protein is Bifunctional protein GlmU.